A 377-amino-acid polypeptide reads, in one-letter code: MPTLAPSGQLEIQAIGDVSTEAGAIITNAEIAYHRWGEYRVDKEGRSNVVLIEHALTGDSNAADWWADLLGPGKAINTDIYCVICTNVIGGCNGSTGPGSMHPDGNFWGNRFPATSIRDQVNAEKQFLDALGITTVAAVLGGSMGGARTLEWAAMYPETVGAAAVLAVSARASAWQIGIQSAQIKAIENDHHWHEGNYYESGCNPATGLGAARRIAHLTYRGELEIDERFGTKAQKNENPLGPYRKPDQRFAVESYLDYQADKLVQRFDAGSYVLLTDALNRHDIGRDRGGLNKALESIKVPVLVAGVDTDILYPYHQQEHLSRNLGNLLAMAKIVSPVGHDAFLTESRQMDRIVRNFFSLISPDEDNPSTYIEFYI.

The region spanning 48–347 is the AB hydrolase-1 domain; the sequence is NVVLIEHALT…PVGHDAFLTE (300 aa). Serine 143 (nucleophile) is an active-site residue. Arginine 213 lines the substrate pocket. Active-site residues include aspartate 311 and histidine 341. A substrate-binding site is contributed by aspartate 342.

The protein belongs to the AB hydrolase superfamily. MetX family. In terms of assembly, homodimer.

It localises to the cytoplasm. The catalysed reaction is L-homoserine + acetyl-CoA = O-acetyl-L-homoserine + CoA. Its pathway is amino-acid biosynthesis; L-methionine biosynthesis via de novo pathway; O-acetyl-L-homoserine from L-homoserine: step 1/1. Transfers an acetyl group from acetyl-CoA to L-homoserine, forming acetyl-L-homoserine. The protein is Homoserine O-acetyltransferase of Corynebacterium glutamicum (strain ATCC 13032 / DSM 20300 / JCM 1318 / BCRC 11384 / CCUG 27702 / LMG 3730 / NBRC 12168 / NCIMB 10025 / NRRL B-2784 / 534).